The following is a 407-amino-acid chain: MTPMKRSVQTQVSEPFMESWGEESLPELPAEQSLTEYSDLEEAPSAHTLYVGHLNPQFSVPVLACLLRDTLERLEMPVAREHIEVVRRPRKAYALVQVTVHRDTLASLPWRLQTALEEHLILKELAARGKDLLLSEAQGPFSHREEKEEEEEDSGLSPGPSPGSGVPLPTWPTHTLPDRPQAQQLQSCQGRPSGVCSDSAIVHQQIVGKDQLFQGAFLGSETRNMEFKRGSGEYLSLAFKHHVRRYVCAFLNSEGGSLLVGVEDSGLVQGIRCSHRDEDRARLLVDSILQGFKPQIFPDAYTLTFIPVISTSETSVPLKVIRLTVHTPKAQSQPQLYQTDQGEVFLRRDGSIQGPLSASAIQEWCRQRWLVELGKLEEKMKALMMEKEQLQQQLQQHGPVSCTCCVL.

Disordered regions lie at residues 1–28 and 137–191; these read MTPM…LPEL and AQGP…CQGR. Residues 155-167 are compositionally biased toward low complexity; the sequence is GLSPGPSPGSGVP. Residues 181–190 show a composition bias toward polar residues; the sequence is QAQQLQSCQG. 261 to 268 is a binding site for ATP; the sequence is GVEDSGLV. A coiled-coil region spans residues 366–398; sequence RQRWLVELGKLEEKMKALMMEKEQLQQQLQQHG.

It belongs to the Schlafen family. Subgroup I subfamily.

This Homo sapiens (Human) protein is Schlafen-like protein 1 (SLFNL1).